Reading from the N-terminus, the 465-residue chain is tRNA-2-methylthio-N(6)-dimethylallyladenosine synthase (465 aa).

In terms of domain architecture, MTTase N-terminal spans Met-26–Arg-141. [4Fe-4S] cluster-binding residues include Cys-35, Cys-71, Cys-104, Cys-173, Cys-177, and Cys-180. Residues Pro-159–Arg-388 enclose the Radical SAM core domain. The TRAM domain maps to Leu-391 to Gly-453.

Belongs to the methylthiotransferase family. MiaB subfamily. As to quaternary structure, monomer. It depends on [4Fe-4S] cluster as a cofactor.

The protein resides in the cytoplasm. It carries out the reaction N(6)-dimethylallyladenosine(37) in tRNA + (sulfur carrier)-SH + AH2 + 2 S-adenosyl-L-methionine = 2-methylsulfanyl-N(6)-dimethylallyladenosine(37) in tRNA + (sulfur carrier)-H + 5'-deoxyadenosine + L-methionine + A + S-adenosyl-L-homocysteine + 2 H(+). In terms of biological role, catalyzes the methylthiolation of N6-(dimethylallyl)adenosine (i(6)A), leading to the formation of 2-methylthio-N6-(dimethylallyl)adenosine (ms(2)i(6)A) at position 37 in tRNAs that read codons beginning with uridine. This Thermus thermophilus (strain ATCC 27634 / DSM 579 / HB8) protein is tRNA-2-methylthio-N(6)-dimethylallyladenosine synthase.